A 712-amino-acid chain; its full sequence is Transcriptional regulator GZF3 (712 aa).

Polar residues predominate over residues 1-13; it reads MSMSDIQQRPQIP. Disordered stretches follow at residues 1–20, 27–135, 173–280, 377–533, and 596–712; these read MSMS…TAAV, NVNT…GPVC, SLKT…HHHL, DVSS…GNNF, and LNNN…KVKI. 2 stretches are compositionally biased toward low complexity: residues 27-84 and 107-131; these read NVNT…EQSS and PKTG…ISMS. A GATA-type zinc finger spans residues 135–159; sequence CGNCQTQTTPLWRRDETGQVLCNAC. A compositionally biased stretch (low complexity) spans 186 to 199; the sequence is KQNGSNSQSSKSSG. The segment covering 213–223 has biased composition (basic residues); it reads GKKSPKSKKKS. Positions 246–261 are enriched in polar residues; it reads ATSNNTPTFKSTTSQS. The segment covering 268–280 has biased composition (basic residues); it reads NHHHQHHNHHHHL. Positions 379–414 are enriched in low complexity; that stretch reads SSINGSSTSLSSSSASSSIFSSVAPSTSSSSSLSNG. Polar residues-rich tracts occupy residues 429 to 447 and 484 to 498; these read SKIS…TPLQ and QQSM…RSPI. Low complexity-rich tracts occupy residues 499-532 and 596-616; these read NGNQ…NGNN and LNNN…QPQQ. A coiled-coil region spans residues 545–598; the sequence is TRISELELVNDLYRTRIMELEAMEQAARLRENSMKKRLDEVMNLQINYQNLLNN. Residues 631 to 667 show a composition bias toward polar residues; the sequence is DQGSQSISPNVSITGSTTITSPNSRSKIISETTPTHH.

It localises to the nucleus. In terms of biological role, probable transcription factor involved in response to fluconazole, LiCl, and copper. The protein is Transcriptional regulator GZF3 (GZF3) of Candida albicans (strain SC5314 / ATCC MYA-2876) (Yeast).